Here is a 183-residue protein sequence, read N- to C-terminus: Nucleoside triphosphate pyrophosphatase (183 aa).

Asp71 (proton acceptor) is an active-site residue.

This sequence belongs to the Maf family. A divalent metal cation serves as cofactor.

It localises to the cytoplasm. It carries out the reaction a ribonucleoside 5'-triphosphate + H2O = a ribonucleoside 5'-phosphate + diphosphate + H(+). It catalyses the reaction a 2'-deoxyribonucleoside 5'-triphosphate + H2O = a 2'-deoxyribonucleoside 5'-phosphate + diphosphate + H(+). In terms of biological role, nucleoside triphosphate pyrophosphatase. May have a dual role in cell division arrest and in preventing the incorporation of modified nucleotides into cellular nucleic acids. This is Nucleoside triphosphate pyrophosphatase from Campylobacter jejuni subsp. jejuni serotype O:2 (strain ATCC 700819 / NCTC 11168).